The sequence spans 369 residues: Chorismate synthase (369 aa).

Residues arginine 48 and arginine 54 each coordinate NADP(+). FMN-binding positions include 125-127 (RSS), 238-239 (NA), glycine 278, 293-297 (KPTSS), and arginine 319.

Belongs to the chorismate synthase family. As to quaternary structure, homotetramer. Requires FMNH2 as cofactor.

The enzyme catalyses 5-O-(1-carboxyvinyl)-3-phosphoshikimate = chorismate + phosphate. Its pathway is metabolic intermediate biosynthesis; chorismate biosynthesis; chorismate from D-erythrose 4-phosphate and phosphoenolpyruvate: step 7/7. Functionally, catalyzes the anti-1,4-elimination of the C-3 phosphate and the C-6 proR hydrogen from 5-enolpyruvylshikimate-3-phosphate (EPSP) to yield chorismate, which is the branch point compound that serves as the starting substrate for the three terminal pathways of aromatic amino acid biosynthesis. This reaction introduces a second double bond into the aromatic ring system. This Nitrosococcus oceani (strain ATCC 19707 / BCRC 17464 / JCM 30415 / NCIMB 11848 / C-107) protein is Chorismate synthase.